A 548-amino-acid chain; its full sequence is Ran-binding protein 9 (548 aa).

Residues 1–23 (MSSPPLHGLSSVGHLSRDPPPRS) form a disordered region. The region spanning 2-189 (SSPPLHGLSS…VDANFGQSPF (188 aa)) is the B30.2/SPRY domain. Positions 217-249 (WQSMIQRMVSSYLVHHGYCSTAEAFAKSTDQTV) constitute a LisH domain. A CTLH domain is found at 255–312 (SIKNRQRIQKLVLSGRMGEAIETTQQLYPSLLERNPNLLFTLKVRQFIEMVNGTDSEV).

The protein belongs to the RANBP9/10 family. As to quaternary structure, identified in the CTLH complex that contains at least MAEA, RMND5A (or alternatively its paralog RMND5B), GID8, WDR26, and RANBP9 and/or RANBP10.

The protein localises to the cytoplasm. Its subcellular location is the cell membrane. It is found in the nucleus. May act as scaffolding protein, and as adapter protein to couple membrane receptors to intracellular signaling pathways. Acts as a mediator of cell spreading and actin cytoskeleton rearrangement. Core component of the CTLH E3 ubiquitin-protein ligase complex that mediates ubiquitination and subsequent proteasomal degradation of target proteins. This is Ran-binding protein 9 (ranbp9) from Xenopus laevis (African clawed frog).